The chain runs to 179 residues: MNATPASADDLIVIGKIYSVHGVRGEVKVYSFTDPIGNLLDYKTWTLRREGSVDKQVELVSGRLQSKFLVTKLKGLDDREEARLLSGYEICVPRNLFPDLDDGEYYWYQLEGLKVIDQLGQLLGKIDHLLETGSNDVMVVKPCAGSLDDRERLLPYTEQCVLAIDMAAGEMKVDWDADF.

The region spanning 102–179 (DGEYYWYQLE…EMKVDWDADF (78 aa)) is the PRC barrel domain.

This sequence belongs to the RimM family. In terms of assembly, binds ribosomal protein uS19.

The protein resides in the cytoplasm. An accessory protein needed during the final step in the assembly of 30S ribosomal subunit, possibly for assembly of the head region. Essential for efficient processing of 16S rRNA. May be needed both before and after RbfA during the maturation of 16S rRNA. It has affinity for free ribosomal 30S subunits but not for 70S ribosomes. The polypeptide is Ribosome maturation factor RimM (Pseudomonas syringae pv. syringae (strain B728a)).